Reading from the N-terminus, the 597-residue chain is MALSFFSGGGSASHAKYFDIRLDEDYIVFRGGEQEAASAHLSGKLLLCLSEPLSIKHIRLHLTGISRVCWHLPSSSAGGGRKSWRERVIYEKTWRFRDPGKGKTEILPAGNYEYPFNLVLEGNMPESIEGLSDTYITYRFKAEIGRKYAKDIIVRKPLRIIRTLEPSALELAHAMSVENIWPNKIEYSISTPTKAVIFGTSIRVDFKLIPLLKGLTIGQIVSQLIESHDLTLNPEDPDSIRNTYKNTRTILNDEFELDHDNALEIIDEAAEGYQFSRYLDLPKTLTRCLQDTDTKGIKVRHKLKFRVQLMNPDGHISELRATLPVSIFISPNLAIDENNNLVDQTPQSAQRAINDIAQQAPPLYGEHQFDQLYSELDPNGYRTPGPGSGPGTPFGTLSRNLSAENLASMNALTNTDISASALHSRLSNLSNLNITRPHQPSPTDHESQNDSEHRRLGVPADYFGPSSGSNSHSPSSPVLSRRPSDEVDHEHVPSGMATPFHPQYAEVETLSRVPSYSTAVRTTKTFPFRHLSSHLSKPISEMLGADLANSSLPWIFFIIGRALVTLTPLVTMMKTEDCDSFKLGLESRIRTEAASPA.

Disordered regions lie at residues 375–398 (ELDPNGYRTPGPGSGPGTPFGTLS) and 432–499 (LNIT…MATP). Positions 443-455 (TDHESQNDSEHRR) are enriched in basic and acidic residues. Residues 465–481 (PSSGSNSHSPSSPVLSR) are compositionally biased toward low complexity. Positions 482–492 (RPSDEVDHEHV) are enriched in basic and acidic residues.

Belongs to the arrestin family. In terms of assembly, interacts with hulA.

In terms of biological role, component of the regulatory network controlling carbon source utilization through ubiquitination and deubiquitination involving creA, creB, creC, creD and acrB. May be involved in signaling by recognizing appropriately phosphorylated substrates via its arrestin domains and then recruit a HECT-type ubiquitin ligase such as hulA, leading to ubiquitination of the substrate, providing a link between ubiquitination and phosphorylation in protein regulation and stability. In Aspergillus oryzae (strain ATCC 42149 / RIB 40) (Yellow koji mold), this protein is Probable HECT-type ubiquitin ligase-interacting protein creD (creD).